We begin with the raw amino-acid sequence, 356 residues long: Phosphate acyltransferase (356 aa).

The protein belongs to the PlsX family. In terms of assembly, homodimer. Probably interacts with PlsY.

The protein localises to the cytoplasm. The enzyme catalyses a fatty acyl-[ACP] + phosphate = an acyl phosphate + holo-[ACP]. It participates in lipid metabolism; phospholipid metabolism. Its function is as follows. Catalyzes the reversible formation of acyl-phosphate (acyl-PO(4)) from acyl-[acyl-carrier-protein] (acyl-ACP). This enzyme utilizes acyl-ACP as fatty acyl donor, but not acyl-CoA. The sequence is that of Phosphate acyltransferase from Bartonella bacilliformis (strain ATCC 35685 / KC583 / Herrer 020/F12,63).